Reading from the N-terminus, the 41-residue chain is Probable cinnamyl alcohol dehydrogenase 2 (41 aa).

This sequence belongs to the zinc-containing alcohol dehydrogenase family. Zn(2+) serves as cofactor.

It catalyses the reaction (E)-cinnamyl alcohol + NADP(+) = (E)-cinnamaldehyde + NADPH + H(+). The catalysed reaction is (E)-coniferol + NADP(+) = (E)-coniferaldehyde + NADPH + H(+). It carries out the reaction (E)-sinapyl alcohol + NADP(+) = (E)-sinapaldehyde + NADPH + H(+). The enzyme catalyses (E)-4-coumaroyl alcohol + NADP(+) = (E)-4-coumaraldehyde + NADPH + H(+). It catalyses the reaction (E)-caffeyl alcohol + NADP(+) = (E)-caffeyl aldehyde + NADPH + H(+). It functions in the pathway aromatic compound metabolism; phenylpropanoid biosynthesis. Functionally, involved in lignin biosynthesis. Catalyzes the final step specific for the production of lignin monomers, like coniferyl alcohol, sinapyl alcohol and 4-coumaryl alcohol. This is Probable cinnamyl alcohol dehydrogenase 2 from Pseudotsuga menziesii (Douglas-fir).